A 456-amino-acid polypeptide reads, in one-letter code: Argininosuccinate lyase (456 aa).

This sequence belongs to the lyase 1 family. Argininosuccinate lyase subfamily.

The protein localises to the cytoplasm. It catalyses the reaction 2-(N(omega)-L-arginino)succinate = fumarate + L-arginine. Its pathway is amino-acid biosynthesis; L-arginine biosynthesis; L-arginine from L-ornithine and carbamoyl phosphate: step 3/3. The sequence is that of Argininosuccinate lyase from Listeria innocua serovar 6a (strain ATCC BAA-680 / CLIP 11262).